The chain runs to 709 residues: Kelch domain-containing protein STK_09390 (709 aa).

The signal sequence occupies residues 1–22 (MKRNTLLALVLVILIFPTLSTA). Kelch repeat units follow at residues 49 to 94 (KIFL…VCNN), 96 to 140 (LYVV…SYDY), 141 to 192 (KIYV…FNGS), 193 to 240 (ALFV…YYNG), 242 to 288 (MYLV…VQIG), and 290 to 340 (KLII…DTNA). Fibronectin type-III domains lie at 315–405 (PPPK…VPNP), 406–488 (PIIK…ASKA), 489–566 (NLTV…IYYI), and 568–643 (PASP…NDVR).

This Sulfurisphaera tokodaii (strain DSM 16993 / JCM 10545 / NBRC 100140 / 7) (Sulfolobus tokodaii) protein is Kelch domain-containing protein STK_09390.